The primary structure comprises 361 residues: Chorismate synthase (361 aa).

NADP(+) contacts are provided by R48 and R54. Residues 125–127, 238–239, G278, 293–297, and R319 contribute to the FMN site; these read RSS, NA, and KPTSS.

Belongs to the chorismate synthase family. Homotetramer. FMNH2 is required as a cofactor.

It catalyses the reaction 5-O-(1-carboxyvinyl)-3-phosphoshikimate = chorismate + phosphate. It functions in the pathway metabolic intermediate biosynthesis; chorismate biosynthesis; chorismate from D-erythrose 4-phosphate and phosphoenolpyruvate: step 7/7. Catalyzes the anti-1,4-elimination of the C-3 phosphate and the C-6 proR hydrogen from 5-enolpyruvylshikimate-3-phosphate (EPSP) to yield chorismate, which is the branch point compound that serves as the starting substrate for the three terminal pathways of aromatic amino acid biosynthesis. This reaction introduces a second double bond into the aromatic ring system. This chain is Chorismate synthase, found in Vibrio vulnificus (strain YJ016).